Reading from the N-terminus, the 444-residue chain is Trigger factor (444 aa).

The PPIase FKBP-type domain occupies 160 to 245 (DMQVTFDFEG…VKQVEKPKLP (86 aa)).

Belongs to the FKBP-type PPIase family. Tig subfamily.

It localises to the cytoplasm. The catalysed reaction is [protein]-peptidylproline (omega=180) = [protein]-peptidylproline (omega=0). In terms of biological role, involved in protein export. Acts as a chaperone by maintaining the newly synthesized protein in an open conformation. Functions as a peptidyl-prolyl cis-trans isomerase. The chain is Trigger factor from Acinetobacter baumannii (strain AB0057).